Consider the following 342-residue polypeptide: Aristolochene synthase prx2 (342 aa).

Mg(2+) contacts are provided by aspartate 115, asparagine 244, serine 248, and glutamate 252. 2 residues coordinate (2E,6E)-farnesyl diphosphate: arginine 340 and tyrosine 341.

It belongs to the terpene synthase family. As to quaternary structure, homodimer. Mg(2+) is required as a cofactor.

It catalyses the reaction (2E,6E)-farnesyl diphosphate = (+)-aristolochene + diphosphate. The protein operates within sesquiterpene biosynthesis; aristolochene biosynthesis; aristolochene from farnesyl diphosphate: step 1/1. Its function is as follows. Aristolochene synthase; part of the gene cluster that mediates the biosynthesis of PR-toxin, a bicyclic sesquiterpene belonging to the eremophilane class and acting as a mycotoxin. The first step of the pathway is catalyzed by the aristolochene synthase which performs the cyclization of trans,trans-farnesyl diphosphate (FPP) to the bicyclic sesquiterpene aristolochene. Following the formation of aristolochene, the non-oxygenated aristolochene is converted to the trioxygenated intermediate eremofortin B, via 7-epi-neopetasone. This conversion appears to involve three enzymes, a hydroxysterol oxidase-like enzyme, the quinone-oxidase prx3 that forms the quinone-type-structure in the bicyclic nucleus of aristolochene with the C8-oxo group and the C-3 hydroxyl group, and the P450 monooxygenase prx9 that introduces the epoxide at the double bond between carbons 1 and 2. No monoxy or dioxy-intermediates have been reported to be released to the broth, so these three early oxidative reactions may be coupled together. Eremofortin B is further oxidized by another P450 monooxygenase, that introduces a second epoxide between carbons 7 and 11 prior to acetylation to eremofortin A by the acetyltransferase prx11. The second epoxidation may be performed by a second P450 monooxygenase. After the acetylation step, the conversion of eremofortin A to eremofortin C and then to PR-toxin requires only two enzymes. First the conversion of eremofortin A to eremofortin C proceeds by oxidation of the side chain of the molecule at C-12 and is catalyzed by the short-chain oxidoreductase prx1. The cytochrome P450 monooxygenase prx8 also plays a role in this step. The primary alcohol formed at C-12 is finally oxidized by the short-chain alcohol dehydrogenase prx4 that forms PR-toxin. The chain is Aristolochene synthase prx2 from Penicillium rubens (strain ATCC 28089 / DSM 1075 / NRRL 1951 / Wisconsin 54-1255) (Penicillium chrysogenum).